Reading from the N-terminus, the 155-residue chain is Large ribosomal subunit protein uL30 (155 aa).

It belongs to the universal ribosomal protein uL30 family. As to quaternary structure, part of the 50S ribosomal subunit.

This is Large ribosomal subunit protein uL30 from Pyrococcus abyssi (strain GE5 / Orsay).